The following is a 123-amino-acid chain: Secreted LysM effector Lys1 (123 aa).

Residues 1-20 (MMGLAKTLLLASQLTAVVVA) form the signal peptide. In terms of domain architecture, LysM spans 72 to 118 (KFCWVQAGNKCYQVAMENHISLADFLKWNPGAGSDCRTLWANTYACV).

It belongs to the secreted LysM effector family.

In terms of biological role, might have a role in sequestration of chitin oligosaccharides (breakdown products of fungal cell walls that are released during invasion and act as triggers of host immunity) to dampen host defense. This is Secreted LysM effector Lys1 from Pochonia chlamydosporia (strain 123) (Metacordyceps chlamydosporia).